Here is a 320-residue protein sequence, read N- to C-terminus: o-succinylbenzoate synthase (320 aa).

Lys-133 serves as the catalytic Proton donor. Residues Asp-161, Glu-190, and Asp-213 each contribute to the Mg(2+) site. Residue Lys-235 is the Proton acceptor of the active site.

It belongs to the mandelate racemase/muconate lactonizing enzyme family. MenC type 1 subfamily. A divalent metal cation serves as cofactor.

It catalyses the reaction (1R,6R)-6-hydroxy-2-succinyl-cyclohexa-2,4-diene-1-carboxylate = 2-succinylbenzoate + H2O. The protein operates within quinol/quinone metabolism; 1,4-dihydroxy-2-naphthoate biosynthesis; 1,4-dihydroxy-2-naphthoate from chorismate: step 4/7. Its pathway is quinol/quinone metabolism; menaquinone biosynthesis. Its function is as follows. Converts 2-succinyl-6-hydroxy-2,4-cyclohexadiene-1-carboxylate (SHCHC) to 2-succinylbenzoate (OSB). The chain is o-succinylbenzoate synthase from Shigella boydii serotype 4 (strain Sb227).